The following is a 302-amino-acid chain: Glutaminase (302 aa).

Substrate contacts are provided by Ser61, Asn111, Glu155, Asn162, Tyr186, Tyr238, and Val256.

The protein belongs to the glutaminase family. As to quaternary structure, homotetramer.

The enzyme catalyses L-glutamine + H2O = L-glutamate + NH4(+). The chain is Glutaminase from Pseudomonas syringae pv. tomato (strain ATCC BAA-871 / DC3000).